We begin with the raw amino-acid sequence, 145 residues long: Cytochrome c2 (145 aa).

An N-terminal signal peptide occupies residues 1 to 21 (MKFQVKALAAIAAFAALPALA). Residue glutamine 22 is modified to Pyrrolidone carboxylic acid. Residues cysteine 36, cysteine 39, histidine 40, and methionine 121 each coordinate heme c.

The protein belongs to the cytochrome c family. In terms of processing, binds 1 heme c group covalently per subunit.

The protein localises to the periplasm. In terms of biological role, cytochrome c2 is found mainly in purple, non-sulfur, photosynthetic bacteria where it functions as the electron donor to the oxidized bacteriochlorophyll in the photophosphorylation pathway. However, it may also have a role in the respiratory chain and is found in some non-photosynthetic bacteria. This Cereibacter sphaeroides (strain ATCC 17023 / DSM 158 / JCM 6121 / CCUG 31486 / LMG 2827 / NBRC 12203 / NCIMB 8253 / ATH 2.4.1.) (Rhodobacter sphaeroides) protein is Cytochrome c2 (cycA).